A 47-amino-acid chain; its full sequence is Delta-actitoxin-Ael1a (47 aa).

Intrachain disulfides connect Cys4/Cys44, Cys6/Cys34, and Cys27/Cys45.

The protein belongs to the sea anemone sodium channel inhibitory toxin family. Type I subfamily. Expressed in ectodermal glands. Not expressed in nematocytes.

The protein resides in the secreted. In terms of biological role, binds specifically to voltage-gated sodium channels (Nav), thereby delaying their inactivation during signal transduction. It strongly stimulates mammalian cardiac muscle contraction. Paralyzes the shore crab (C.maenas) by tetanic contractions after intramuscular injection. The chain is Delta-actitoxin-Ael1a from Anthopleura elegantissima (Green aggregating anemone).